A 455-amino-acid polypeptide reads, in one-letter code: SH3 domain-binding protein 5 (455 aa).

Residues 1–12 are compositionally biased toward basic and acidic residues; sequence MDAALKRSRSEE. Residues 1–63 form a disordered region; that stretch reads MDAALKRSRS…QSTDDINRRE (63 aa). Residues 22–41 show a composition bias toward acidic residues; the sequence is DEEEEEEEGMEQGLEEEEEV. Residues 31 to 265 form a sufficient for interaction with RAB11A and for guanine nucleotide exchange activity region; the sequence is MEQGLEEEEE…EIHERRRSSA (235 aa). The segment covering 42–51 has biased composition (basic and acidic residues); the sequence is DPRIQGELEK. Coiled coils occupy residues 44–90, 97–145, 154–200, and 211–255; these read RIQG…LVKK, DSKP…RLLE, AWQE…LEKK, and YFEL…MISD. Disordered stretches follow at residues 259–293 and 306–345; these read ERRR…PEPD and SCSN…VRPG. Positions 306 to 317 are enriched in acidic residues; that stretch reads SCSNFVSEDDSE. Low complexity predominate over residues 320 to 332; it reads SVSSFSSGPTSPS. Ser-351 is modified (phosphoserine; by MAPK12 and MAPK9). Positions 369–435 are disordered; it reads SECSGASSPE…ALENRMKQLS (67 aa). Residues Ser-375 and Ser-376 each carry the phosphoserine modification. Positions 380–396 are enriched in basic and acidic residues; sequence EVERGDRAEGAENKTSD. Low complexity predominate over residues 403–421; sequence GLSSSSGSGGSSKSQSSTS. Ser-418 and Ser-421 each carry phosphoserine.

This sequence belongs to the SH3BP5 family. As to quaternary structure, interacts with BTK. Interacts with all isoforms of MAPK8, MAPK9, MAPK10 and MAPK12. Interacts with GDP-bound and nucleotide-free forms of RAB11A. As to expression, highly expressed in testis and ovaries. It is also expressed in a variety of tissues including spleen, lymph node, thymus, bone marrow, fetal liver, colon, small intestine and prostate.

It localises to the cytoplasmic vesicle membrane. The protein resides in the mitochondrion. Functionally, functions as a guanine nucleotide exchange factor (GEF) with specificity for RAB11A and RAB25. Inhibits the auto- and transphosphorylation activity of BTK. Plays a negative regulatory role in BTK-related cytoplasmic signaling in B-cells. May be involved in BCR-induced apoptotic cell death. The polypeptide is SH3 domain-binding protein 5 (SH3BP5) (Homo sapiens (Human)).